Reading from the N-terminus, the 267-residue chain is 4-hydroxy-tetrahydrodipicolinate reductase (267 aa).

NAD(+)-binding positions include 9-14 and Asp35; that span reads GVSGRM. Arg36 serves as a coordination point for NADP(+). Residues 98 to 100 and 122 to 125 each bind NAD(+); these read GTT and APNM. The Proton donor/acceptor role is filled by His155. Position 156 (His156) interacts with (S)-2,3,4,5-tetrahydrodipicolinate. Lys159 (proton donor) is an active-site residue. 165-166 lines the (S)-2,3,4,5-tetrahydrodipicolinate pocket; it reads GT.

This sequence belongs to the DapB family.

The protein localises to the cytoplasm. It catalyses the reaction (S)-2,3,4,5-tetrahydrodipicolinate + NAD(+) + H2O = (2S,4S)-4-hydroxy-2,3,4,5-tetrahydrodipicolinate + NADH + H(+). The catalysed reaction is (S)-2,3,4,5-tetrahydrodipicolinate + NADP(+) + H2O = (2S,4S)-4-hydroxy-2,3,4,5-tetrahydrodipicolinate + NADPH + H(+). Its pathway is amino-acid biosynthesis; L-lysine biosynthesis via DAP pathway; (S)-tetrahydrodipicolinate from L-aspartate: step 4/4. Catalyzes the conversion of 4-hydroxy-tetrahydrodipicolinate (HTPA) to tetrahydrodipicolinate. The protein is 4-hydroxy-tetrahydrodipicolinate reductase of Thiobacillus denitrificans (strain ATCC 25259 / T1).